Consider the following 194-residue polypeptide: Adenylate kinase (194 aa).

Position 12 to 17 (Gly12 to Thr17) interacts with ATP. Residues Ser34–Val63 are NMP. AMP contacts are provided by residues Thr35, Arg40, Gln61 to Val63, Gly88 to Arg91, and Gln95. Positions Gly130–Asp136 are LID. An ATP-binding site is contributed by Arg131. 2 residues coordinate AMP: Arg133 and Arg145. Arg173 provides a ligand contact to ATP.

It belongs to the adenylate kinase family. Monomer.

It localises to the cytoplasm. The enzyme catalyses AMP + ATP = 2 ADP. It functions in the pathway purine metabolism; AMP biosynthesis via salvage pathway; AMP from ADP: step 1/1. Functionally, catalyzes the reversible transfer of the terminal phosphate group between ATP and AMP. Plays an important role in cellular energy homeostasis and in adenine nucleotide metabolism. The polypeptide is Adenylate kinase (Nitratiruptor sp. (strain SB155-2)).